A 193-amino-acid chain; its full sequence is Imidazoleglycerol-phosphate dehydratase (193 aa).

It belongs to the imidazoleglycerol-phosphate dehydratase family.

The protein localises to the cytoplasm. It catalyses the reaction D-erythro-1-(imidazol-4-yl)glycerol 3-phosphate = 3-(imidazol-4-yl)-2-oxopropyl phosphate + H2O. The protein operates within amino-acid biosynthesis; L-histidine biosynthesis; L-histidine from 5-phospho-alpha-D-ribose 1-diphosphate: step 6/9. This Saccharolobus solfataricus (strain ATCC 35092 / DSM 1617 / JCM 11322 / P2) (Sulfolobus solfataricus) protein is Imidazoleglycerol-phosphate dehydratase (hisB).